The following is a 138-amino-acid chain: Acidic phospholipase A2 Ts-A6 (138 aa).

The signal sequence occupies residues 1–16; that stretch reads MRALWIMAVLLLGVEG. Cystine bridges form between C42–C131, C44–C60, C59–C111, C65–C138, C66–C104, C73–C97, and C91–C102. Ca(2+) is bound by residues Y43, G45, and G47. H63 is an active-site residue. D64 is a binding site for Ca(2+). Residue D105 is part of the active site.

Ca(2+) is required as a cofactor. As to expression, expressed by the venom gland.

Its subcellular location is the secreted. It catalyses the reaction a 1,2-diacyl-sn-glycero-3-phosphocholine + H2O = a 1-acyl-sn-glycero-3-phosphocholine + a fatty acid + H(+). Its function is as follows. Snake venom phospholipase A2 (PLA2) that shows a moderate inhibition of ADP-induced human platelet aggregation when tested on platelet rich plasma. Exhibits high hydrolytic activities and prefers the anionic micelles (dPPC with deoxycholate) to the zwitterionic micelles (dPPC with Triton X-100). PLA2 catalyzes the calcium-dependent hydrolysis of the 2-acyl groups in 3-sn-phosphoglycerides. This chain is Acidic phospholipase A2 Ts-A6, found in Trimeresurus stejnegeri (Chinese green tree viper).